Here is a 255-residue protein sequence, read N- to C-terminus: ETS-related transcription factor Elf-5 (255 aa).

Positions 33–119 (YPAFEHQTAC…FILQSIRSQG (87 aa)) constitute a PNT domain. A DNA-binding region (ETS) is located at residues 163–244 (SHLWEFVRDL…VDRRLVYKFG (82 aa)).

It belongs to the ETS family.

The protein localises to the nucleus. Its function is as follows. Transcriptionally activator that may play a role in regulating the later stages of keratinocytes terminal differentiation. Binds to DNA sequences containing the consensus nucleotide core sequence GGA[AT]. The sequence is that of ETS-related transcription factor Elf-5 (ELF5) from Bos taurus (Bovine).